The sequence spans 632 residues: Probable extracellular metalloproteinase 2 (632 aa).

The N-terminal stretch at 1-19 is a signal peptide; that stretch reads MHGLLLAGLAAALPLGVAG. A propeptide spanning residues 20 to 244 is cleaved from the precursor; the sequence is LPARQQSGLS…VHNVVDYVAS (225 aa). 2 N-linked (GlcNAc...) asparagine glycosylation sites follow: asparagine 81 and asparagine 270. Residue histidine 429 coordinates Zn(2+). The active site involves glutamate 430. Histidine 433 lines the Zn(2+) pocket.

Belongs to the peptidase M36 family. It depends on Zn(2+) as a cofactor.

It is found in the secreted. In terms of biological role, secreted metalloproteinase probably acting as a virulence factor. The sequence is that of Probable extracellular metalloproteinase 2 (MEP2) from Arthroderma benhamiae (strain ATCC MYA-4681 / CBS 112371) (Trichophyton mentagrophytes).